The following is a 309-amino-acid chain: MVSDEDELNLLVIIVDTNPIWWGKQALKESQFTLSKCIDAVMVLGNSHLFMNRSNKLAVIASHIQESRFLYPGKNGRLGDFFGDPGNPSSEFTPSGSKDGKYELLTAANEVIAEEIKDLMTKSDIEGQHTETLLAGSLAKALCYIHRMNKEVKDNQEMKSRILVIKAAEDSALQYMNFMNVIFAAQKQNILIDACVLDSDSGLLQQACDITGGLYLKVPQMPSLLQYLLWVFLPDQDQRSQLILPPPVHVDYRAACFCHRNLIEIGYVCSVCLSIFCNFSPICTTCETAFKISLPPVLKAKKKKLKMSS.

Residues 269–286 (CSVCLSIFCNFSPICTTC) form a C4-type zinc finger.

This sequence belongs to the TFB4 family. Part of a TFIID-containing RNA polymerase II pre-initiation complex that is composed of TBP and at least GTF2A1, GTF2A2, GTF2E1, GTF2E2, GTF2F1, GTF2H2, GTF2H3, GTF2H4, GTF2H5, GTF2B, TCEA1, ERCC2, ERCC3, TAF1, TAF2, TAF3, TAF4, TAF5, TAF6, TAF7, TAF8, TAF9, TAF10, TAF11, TAF12 and TAF13. Component of the 7-subunit TFIIH core complex composed of XPB/ERCC3, XPD/ERCC2, GTF2H1, GTF2H2, GTF2H3, GTF2H4 and GTF2H5, which is active in NER. The core complex associates with the 3-subunit CDK-activating kinase (CAK) module composed of CCNH/cyclin H, CDK7 and MNAT1 to form the 10-subunit holoenzyme (holo-TFIIH) active in transcription. Interacts with RARA; the interaction requires prior phosphorylation of RARA on 'Ser-369' which then enhances interaction of RARA with CDK7.

The protein resides in the nucleus. Component of the general transcription and DNA repair factor IIH (TFIIH) core complex, which is involved in general and transcription-coupled nucleotide excision repair (NER) of damaged DNA and, when complexed to CAK, in RNA transcription by RNA polymerase II. In NER, TFIIH acts by opening DNA around the lesion to allow the excision of the damaged oligonucleotide and its replacement by a new DNA fragment. In transcription, TFIIH has an essential role in transcription initiation. When the pre-initiation complex (PIC) has been established, TFIIH is required for promoter opening and promoter escape. Phosphorylation of the C-terminal tail (CTD) of the largest subunit of RNA polymerase II by the kinase module CAK controls the initiation of transcription. The sequence is that of General transcription factor IIH subunit 3 (GTF2H3) from Bos taurus (Bovine).